A 241-amino-acid polypeptide reads, in one-letter code: MTTVKRTVRLITDQNVLPGGEAAVLNDQSFPVREWSIKLVCLNPQGEETDASFVDRVTYKLHPTFQNPTRTIRKPPFQIKEQGWGEFEMEIIIYYADKGGEHRFLHYLHFQQEHYHEDIELNINATRPGLLKALTATGEVPGYSDEGEEARKDKRKNESEVGAGKKKAKAKPVDMDKLAEGLQKLQEDDLLQVVQMVNENKTPDMYVRNDIEGGEFHIDLYTLPDNLLLLLYSFCAKRVTM.

Positions 1–137 (MTTVKRTVRL…PGLLKALTAT (137 aa)) constitute a YEATS domain. The disordered stretch occupies residues 141–169 (PGYSDEGEEARKDKRKNESEVGAGKKKAK). Residues 149 to 159 (EARKDKRKNES) show a composition bias toward basic and acidic residues.

This sequence belongs to the TAF14 family. In terms of assembly, component of the fcp1/TFIIF/polII complex via interaction of tfg3 with both tfg1/TFIIF-alpha and tfg2/TFIIF-beta subunits. Component of the SWI/SNF global transcription activator complex composed of at least arp9, arp42, snf5, snf22, snf30, sbf59, sol1, ssr1, ssr2, ssr3, ssr4 and tfg3. Also interacts with the TATA-binding protein (TBP). Component of the mst2 complex composed of at least eaf6, mst2, nto1, pdp3, ptf1, ptf2 and tfg3.

The protein localises to the nucleus. It is found in the nucleoplasm. Functions as a component of the DNA-binding general transcription factor complex TFIID, and the RNA polymerase II associated general transcription factor complex TFIIF. Binding of TFIID to a promoter (with or without TATA element) is the initial step in preinitiation complex (PIC) formation. TFIID plays a key role in the regulation of gene expression by RNA polymerase II through different activities such as transcription activator interaction, core promoter recognition and selectivity, TFIIA and TFIIB interaction, facilitation of DNA opening and initiation of transcription. TFIIF is essential for the initiation of transcription by RNA polymerase II. TFIIF functions include the recruitment of RNA polymerase II to the promoter bound DNA-TBP-TFIIB complex, decreasing the affinity of RNA polymerase II for non-specific DNA, allowing for the subsequent recruitment of TFIIE and TFIIH, and facilitating RNA polymerase II elongation. The TAF14 subunit has stimulatory activity. Component of the SWI/SNF complex, an ATP-dependent chromatin remodeling complex, required for the positive and negative regulation of gene expression of a large number of genes. It changes chromatin structure by altering DNA-histone contacts within a nucleosome, leading eventually to a change in nucleosome position, thus facilitating or repressing binding of gene-specific transcription factors. Component of the mst2 complex which is a highly specific H3 lysine 14 (H3K14) acetyltransferase that functions together with gcn5 to regulate global levels of H3K14 acetylation (H3K14ac), critical for DNA damage checkpoint activation. This Schizosaccharomyces pombe (strain 972 / ATCC 24843) (Fission yeast) protein is Transcription initiation factor TFIID subunit 14 (tfg3).